The primary structure comprises 399 residues: Mannan endo-1,4-beta-mannosidase 4 (399 aa).

The N-terminal stretch at 1–26 is a signal peptide; the sequence is MNNSIILIFVAILIIFPNEFSKPTRA. Trp88 and Asn203 together coordinate substrate. Catalysis depends on Glu204, which acts as the Proton donor. Substrate is bound at residue Tyr279. The active-site Nucleophile is the Glu318. A disulfide bridge connects residues Cys347 and Cys354. A substrate-binding site is contributed by Trp360.

The protein belongs to the glycosyl hydrolase 5 (cellulase A) family. Expressed in flowers and fruit pericarp.

Its subcellular location is the secreted. It carries out the reaction Random hydrolysis of (1-&gt;4)-beta-D-mannosidic linkages in mannans, galactomannans and glucomannans.. Possesses endo-beta-mannanase and mannan transglycosylase activities. May be involved in cell wall degradation during fruit ripening. The polypeptide is Mannan endo-1,4-beta-mannosidase 4 (MAN4) (Solanum lycopersicum (Tomato)).